We begin with the raw amino-acid sequence, 339 residues long: Histidine protein methyltransferase 1 (339 aa).

A phosphoserine mark is found at S333 and S338.

This sequence belongs to the methyltransferase superfamily. METTL18 family.

It localises to the cytoplasm. The protein resides in the nucleus. The enzyme catalyses L-histidyl-[protein] + S-adenosyl-L-methionine = N(tele)-methyl-L-histidyl-[protein] + S-adenosyl-L-homocysteine + H(+). In terms of biological role, protein-histidine N-methyltransferase that mediates methylation of target protein on His residues. This is Histidine protein methyltransferase 1 from Schizosaccharomyces pombe (strain 972 / ATCC 24843) (Fission yeast).